The primary structure comprises 360 residues: Histidinol-phosphate aminotransferase (360 aa).

At Lys-211 the chain carries N6-(pyridoxal phosphate)lysine.

This sequence belongs to the class-II pyridoxal-phosphate-dependent aminotransferase family. Histidinol-phosphate aminotransferase subfamily. Homodimer. The cofactor is pyridoxal 5'-phosphate.

The enzyme catalyses L-histidinol phosphate + 2-oxoglutarate = 3-(imidazol-4-yl)-2-oxopropyl phosphate + L-glutamate. The protein operates within amino-acid biosynthesis; L-histidine biosynthesis; L-histidine from 5-phospho-alpha-D-ribose 1-diphosphate: step 7/9. This Cronobacter sakazakii (strain ATCC BAA-894) (Enterobacter sakazakii) protein is Histidinol-phosphate aminotransferase.